We begin with the raw amino-acid sequence, 195 residues long: Penicillin-binding protein activator LpoB (195 aa).

A signal peptide spans 1-16 (MKKRALIVLAALVLAS). Cysteine 17 carries N-palmitoyl cysteine lipidation. The S-diacylglycerol cysteine moiety is linked to residue cysteine 17. The disordered stretch occupies residues 19–51 (SRKPASPPAPIEPVPPPVTVSVQPPPPATSEPV). The span at 23-51 (ASPPAPIEPVPPPVTVSVQPPPPATSEPV) shows a compositional bias: pro residues.

The protein belongs to the LpoB family. As to quaternary structure, interacts with PBP1b.

The protein localises to the cell outer membrane. Regulator of peptidoglycan synthesis that is essential for the function of penicillin-binding protein 1B (PBP1b). The sequence is that of Penicillin-binding protein activator LpoB from Sodalis glossinidius (strain morsitans).